The following is a 551-amino-acid chain: Steroid transmembrane transporter SLC22A24 (551 aa).

12 helical membrane-spanning segments follow: residues 16 to 36 (FQILHLIFVLICFILVVPHTV), 146 to 166 (SVAKFIYMTGIFIGHLMGGHL), 174 to 194 (FIVTCGLLTLAVTETSVAFAP), 204 to 222 (FLTGISSSCIRTNSALLIL), 235 to 255 (ALIFSAGGIGQVLLGVLAFGI), 260 to 280 (HLQLAMSVPVFFLLIPTRWLS), 350 to 370 (ICLLSFVRCVSLISTVGLLIN), 378 to 398 (VFLLQCLYGVVCTPANLLGNF), 410 to 430 (IIFMSVMGISILSITFLTQEM), 435 to 455 (LVLASLGGAISSASLTSTAVL), 469 to 489 (LGVIGIFGSAGAALSPLLMIL), and 496 to 516 (LPWIIYGVLPILSSLVVLLLP). Residues 524 to 551 (PDSIQDVENKRKSSREVKKDAVAKVTPF) form a disordered region. A compositionally biased stretch (basic and acidic residues) spans 530 to 545 (VENKRKSSREVKKDAV).

Localized to the kidney. Mainly expressed in the late segments of proximal tubules.

The protein localises to the cell membrane. It carries out the reaction estrone 3-sulfate(out) + glutarate(in) = estrone 3-sulfate(in) + glutarate(out). The enzyme catalyses 17beta-estradiol 17-O-(beta-D-glucuronate)(out) + glutarate(in) = 17beta-estradiol 17-O-(beta-D-glucuronate)(in) + glutarate(out). The catalysed reaction is dehydroepiandrosterone 3-sulfate(out) + glutarate(in) = dehydroepiandrosterone 3-sulfate(in) + glutarate(out). Functionally, renal transmembrane organic anion/dicarboxylate exchanger that participates in the reabsorption of conjugated steroids, as well as bile acids, driven by an outward gradient of dicarboxylates such as glutarate or succinate. Transports estrone 3-sulfate and estradiol-17-glucuronide (17beta-estradiol 17-O-(beta-D-glucuronate)), but not androstanediol glucuronide (5alpha-androstane-3alpha,17beta-diol 3-O-(beta-D-glucuronate)), nor taurocholate. Prefers sulfate conjugates of steroids rather than glucuronide conjugates. The polypeptide is Steroid transmembrane transporter SLC22A24 (Rattus norvegicus (Rat)).